Consider the following 195-residue polypeptide: Imidazoleglycerol-phosphate dehydratase (195 aa).

Belongs to the imidazoleglycerol-phosphate dehydratase family.

The protein resides in the cytoplasm. The enzyme catalyses D-erythro-1-(imidazol-4-yl)glycerol 3-phosphate = 3-(imidazol-4-yl)-2-oxopropyl phosphate + H2O. The protein operates within amino-acid biosynthesis; L-histidine biosynthesis; L-histidine from 5-phospho-alpha-D-ribose 1-diphosphate: step 6/9. This is Imidazoleglycerol-phosphate dehydratase from Frankia casuarinae (strain DSM 45818 / CECT 9043 / HFP020203 / CcI3).